The following is a 254-amino-acid chain: 14-3-3 protein 2 (254 aa).

Belongs to the 14-3-3 family. Homodimer.

This Solanum lycopersicum (Tomato) protein is 14-3-3 protein 2 (TFT2).